The sequence spans 250 residues: Aquaporin SIP2-1 (250 aa).

The next 2 membrane-spanning stretches (helical) occupy residues 14 to 34 (PWLVVGDLVVAAMWVCAGALV) and 55 to 75 (VALSLVYMFFFAWLEGFTGGA). The short motif at 78–80 (NPL) is the NPA 1 element. 4 helical membrane-spanning segments follow: residues 95-115 (LYLFAAFVRMPAQVFGSILGV), 132-152 (SVGVHHGALAEGLATFMVVIV), 178-200 (FHLLSSDITGGVMNPASAFAWAY), and 211-231 (LLVYWLAPLQATLLGVWVVTL). Residues 191–193 (NPA) carry the NPA 2 motif.

It belongs to the MIP/aquaporin (TC 1.A.8) family. SIP (TC 1.A.8.10) subfamily. As to expression, expressed in leaves and anthers, and at lower levels in roots.

The protein resides in the membrane. Functionally, aquaporins facilitate the transport of water and small neutral solutes across cell membranes. The polypeptide is Aquaporin SIP2-1 (SIP2-1) (Oryza sativa subsp. japonica (Rice)).